A 411-amino-acid polypeptide reads, in one-letter code: MTHWFHRNPLKATAPVSFNYYGVVTGPSASKICNDLRSSRARLLELFTDLSCNPEMMKNAADSYFSLLQGFINSLDESTQESKLRYIQNFKWTDTLQGQVPSAQQDAVFELISMGFNVALWHTKYASRLAGKENITEDEAKEVHRSLKIAAGIFKHLKESHIPKLITPAEKGRDLESRLIEAYVIQCQAEAQEVTIARAIELKHAPGLIAALAYETANFYQKADHTLSSLEPAYSAKWRKYLHLKMCFYTAYAYCYHGETLLASDKCGEAIRSLQEAEKLYAKAEALCKEYGETKGPGPTVKPSGHLFFRKLGNLVKNTLEKCQRENGFIYFQKIPTEAPQLELKANYGLVEPIPFEFPPTSAQWTPETLAAFDLTKRPKDDSTKPKPEEEVKPVKEPDIKPQKDTGCYIS.

One can recognise a BRO1 domain in the interval 90-408 (FKWTDTLQGQ…DIKPQKDTGC (319 aa)). N6-acetyllysine is present on K283. Positions 374–411 (DLTKRPKDDSTKPKPEEEVKPVKEPDIKPQKDTGCYIS) are disordered. Residues 375–404 (LTKRPKDDSTKPKPEEEVKPVKEPDIKPQK) are compositionally biased toward basic and acidic residues. C408 carries the post-translational modification Cysteine methyl ester. C408 carries the S-farnesyl cysteine lipid modification. Residues 409-411 (YIS) constitute a propeptide, removed in mature form.

Belongs to the BROX family. Monomer. Interacts with CHMP4B. Interacts with CHMP5: this interaction allows the recruitment of BROX to cellular membranes. Interacts with SYN2; this interaction promotes SYN2 ubiquitination and facilitates the relaxation of mechanical stress imposed by compressive actin fibers at the rupture site. Post-translationally, farnesylation is required for nuclear envelope localization.

It is found in the nucleus membrane. In terms of biological role, nuclear envelope-associated factor that is involved in the nuclear envelope ruptures during interphase (NERDI) repair, where it is locally recruited by CHMP5 and reduces cytoskeletal stress through its action on SYN2 to help reseal the ruptured membrane. The sequence is that of BRO1 domain-containing protein BROX from Pongo abelii (Sumatran orangutan).